The following is a 274-amino-acid chain: Protein TIC 20-I, chloroplastic (274 aa).

The N-terminal 65 residues, 1-65 (MITGYSTPSA…ELPRVSRGVP (65 aa)), are a transit peptide targeting the chloroplast. Helical transmembrane passes span 130 to 152 (LPYL…LHPF), 167 to 187 (IGRL…LGIV), 200 to 220 (VVMG…SKWM), and 229 to 249 (FGMH…LESI).

Belongs to the Tic20 family. In terms of assembly, part of the Tic complex. Component of the 1-MD complex, composed of TIC20-I, TIC214, TIC100 and TIC56. Interacts with the translocating preproteins. Hydrolysis of ATP is essential for the formation of this complex. The 1-MD complex interacts with TIC21. As to expression, expressed in leaves, shoots and roots. High expression in mature photosynthetic tissues. Lower levels in non-photosynthetic tissues and roots.

It is found in the plastid. Its subcellular location is the chloroplast inner membrane. Functionally, involved in protein precursor import into chloroplasts. May be part of an intermediate translocation complex acting as a protein-conducting channel at the inner envelope. Seems to be specific for photosynthesis-related pre-proteins. Partially redundant with TIC20-IV, but not with TIC20-II or TIC20-V. This Arabidopsis thaliana (Mouse-ear cress) protein is Protein TIC 20-I, chloroplastic.